Consider the following 287-residue polypeptide: Pyridoxal kinase PdxY (287 aa).

Substrate contacts are provided by residues S10 and 45–46 (TQ). ATP contacts are provided by residues D112, A144, E149, K182, and 209–212 (RPLV). Position 224 (D224) interacts with substrate.

It belongs to the pyridoxine kinase family. PdxY subfamily. In terms of assembly, homodimer. The cofactor is Mg(2+).

It carries out the reaction pyridoxal + ATP = pyridoxal 5'-phosphate + ADP + H(+). It functions in the pathway cofactor metabolism; pyridoxal 5'-phosphate salvage; pyridoxal 5'-phosphate from pyridoxal: step 1/1. Its function is as follows. Pyridoxal kinase involved in the salvage pathway of pyridoxal 5'-phosphate (PLP). Catalyzes the phosphorylation of pyridoxal to PLP. The chain is Pyridoxal kinase PdxY from Shigella boydii serotype 4 (strain Sb227).